Here is a 749-residue protein sequence, read N- to C-terminus: 5-methyltetrahydropteroyltriglutamate--homocysteine methyltransferase (749 aa).

5-methyltetrahydropteroyltri-L-glutamate-binding positions include 18–21 (REWK) and K112. Residues 420–422 (IGS) and E473 contribute to the L-homocysteine site. Residues 420 to 422 (IGS) and E473 each bind L-methionine. W550 serves as a coordination point for 5-methyltetrahydropteroyltri-L-glutamate. D588 provides a ligand contact to L-homocysteine. An L-methionine-binding site is contributed by D588. A 5-methyltetrahydropteroyltri-L-glutamate-binding site is contributed by E594. Residues H630, C632, and E654 each coordinate Zn(2+). H683 acts as the Proton donor in catalysis. C715 contacts Zn(2+).

It belongs to the vitamin-B12 independent methionine synthase family. Requires Zn(2+) as cofactor.

It carries out the reaction 5-methyltetrahydropteroyltri-L-glutamate + L-homocysteine = tetrahydropteroyltri-L-glutamate + L-methionine. Its pathway is amino-acid biosynthesis; L-methionine biosynthesis via de novo pathway; L-methionine from L-homocysteine (MetE route): step 1/1. Its function is as follows. Catalyzes the transfer of a methyl group from 5-methyltetrahydrofolate to homocysteine resulting in methionine formation. The chain is 5-methyltetrahydropteroyltriglutamate--homocysteine methyltransferase from Staphylococcus haemolyticus (strain JCSC1435).